The chain runs to 548 residues: Alpha-1,3-mannosyl-glycoprotein 4-beta-N-acetylglucosaminyltransferase B (548 aa).

Over 1–7 (MRLRNGT) the chain is Cytoplasmic. The helical; Signal-anchor for type II membrane protein transmembrane segment at 8 to 28 (FLTLLLFCLCAFLSLSWYAAL) threads the bilayer. The Lumenal segment spans residues 29–548 (SGQKGDVVDV…LSEIFLKKAD (520 aa)). Residues 36 to 83 (VDVYQREFLALRDRLHAAEQESLKRSKELNLVLDEIKRAVSERQALRD) are a coiled coil. Residues asparagine 87 and asparagine 103 are each glycosylated (N-linked (GlcNAc...) asparagine).

The protein belongs to the glycosyltransferase 54 family. Interacts with SLC35A3. A divalent metal cation serves as cofactor. In terms of processing, N-glycosylated. As to expression, widely expressed. Strongly overexpressed in pancreatic cancer.

The protein resides in the golgi apparatus membrane. It catalyses the reaction an N(4)-{beta-D-GlcNAc-(1-&gt;2)-alpha-D-Man-(1-&gt;3)-[alpha-D-Man-(1-&gt;6)]-beta-D-Man-(1-&gt;4)-beta-D-GlcNAc-(1-&gt;4)-beta-D-GlcNAc}-L-asparaginyl-[protein] + UDP-N-acetyl-alpha-D-glucosamine = an N(4)-{beta-D-GlcNAc-(1-&gt;2)-[beta-D-GlcNAc-(1-&gt;4)]-alpha-D-Man-(1-&gt;3)-[alpha-D-Man-(1-&gt;6)]-beta-D-Man-(1-&gt;4)-beta-D-GlcNAc-(1-&gt;4)-beta-D-GlcNAc}-L-asparaginyl-[protein] + UDP + H(+). The catalysed reaction is N(4)-{beta-D-GlcNAc-(1-&gt;2)-alpha-D-Man-(1-&gt;3)-[beta-D-GlcNAc-(1-&gt;2)-alpha-D-Man-(1-&gt;6)]-beta-D-Man-(1-&gt;4)-beta-D-GlcNAc-(1-&gt;4)-beta-D-GlcNAc}-L-asparaginyl-[protein] + UDP-N-acetyl-alpha-D-glucosamine = N(4)-{beta-D-GlcNAc-(1-&gt;2)-[beta-D-GlcNAc-(1-&gt;4)]-alpha-D-Man-(1-&gt;3)-[beta-D-GlcNAc-(1-&gt;2)-alpha-D-Man-(1-&gt;6)]-beta-D-Man-(1-&gt;4)-beta-D-GlcNAc-(1-&gt;4)-beta-D-GlcNAc}-L-asparaginyl-[protein] + UDP + H(+). The enzyme catalyses an N(4)-{beta-D-GlcNAc-(1-&gt;2)-alpha-D-Man-(1-&gt;3)-[beta-D-GlcNAc-(1-&gt;2)-[beta-D-GlcNAc-(1-&gt;6)]-alpha-D-Man-(1-&gt;6)]-beta-D-Man-(1-&gt;4)-beta-D-GlcNAc-(1-&gt;4)-beta-D-GlcNAc}-L-asparaginyl-[protein] + UDP-N-acetyl-alpha-D-glucosamine = an N(4)-{beta-D-GlcNAc-(1-&gt;2)-[beta-D-GlcNAc-(1-&gt;4)]-alpha-D-Man-(1-&gt;3)-[beta-D-GlcNAc-(1-&gt;2)-[beta-D-GlcNAc-(1-&gt;6)]-alpha-D-Man-(1-&gt;6)]-beta-D-Man-(1-&gt;4)-beta-D-GlcNAc-(1-&gt;4)-beta-D-GlcNAc}-L-asparaginyl-[protein] + UDP + H(+). It carries out the reaction an N(4)-{beta-D-GlcNAc-(1-&gt;2)-alpha-D-Man-(1-&gt;3)-[beta-D-GlcNAc-(1-&gt;2)-alpha-D-Man-(1-&gt;6)]-beta-D-Man-(1-&gt;4)-beta-D-GlcNAc-(1-&gt;4)-[alpha-L-Fuc-(1-&gt;6)]-beta-D-GlcNAc}-L-asparaginyl-[protein] + UDP-N-acetyl-alpha-D-glucosamine = N(4)-{beta-D-GlcNAc-(1-&gt;2)-[beta-D-GlcNAc-(1-&gt;4)]-alpha-D-Man-(1-&gt;3)-[beta-D-GlcNAc-(1-&gt;2)-alpha-D-Man-(1-&gt;6)]-beta-D-Man-(1-&gt;4)-beta-D-GlcNAc-(1-&gt;4)-[alpha-L-Fuc-(1-&gt;6)]-beta-D-GlcNAc}-asparaginyl-[protein] + UDP + H(+). It catalyses the reaction an N(4)-{beta-D-GlcNAc-(1-&gt;2)-alpha-D-Man-(1-&gt;3)-[beta-D-Gal-(1-&gt;4)-beta-D-GlcNAc-(1-&gt;2)-alpha-D-Man-(1-&gt;6)]-beta-D-Man-(1-&gt;4)-beta-D-GlcNAc-(1-&gt;4)-beta-D-GlcNAc}-L-asparaginyl-[protein] + UDP-N-acetyl-alpha-D-glucosamine = an N(4)-{beta-D-GlcNAc-(1-&gt;2)-[beta-D-GlcNAc-(1-&gt;4)]-alpha-D-Man-(1-&gt;3)-[beta-D-Gal-(1-&gt;4)-beta-D-GlcNAc-(1-&gt;2)-alpha-D-Man-(1-&gt;6)]-beta-D-Man-(1-&gt;4)-beta-D-GlcNAc-(1-&gt;4)-beta-D-GlcNAc}-L-asparaginyl-[protein] + UDP + H(+). The catalysed reaction is N(4)-{beta-D-GlcNAc-(1-&gt;2)-alpha-D-Man-(1-&gt;3)-[alpha-D-Man-(1-&gt;3)-{alpha-D-Man-(1-&gt;6)}-alpha-D-Man-(1-&gt;6)]-beta-D-Man-(1-&gt;4)-beta-D-GlcNAc-(1-&gt;4)-beta-D-GlcNAc}-asparaginyl-[protein] + UDP-N-acetyl-alpha-D-glucosamine = N(4)-{beta-D-GlcNAc-(1-&gt;2)-[beta-D-GlcNAc-(1-&gt;4)]-alpha-D-Man-(1-&gt;3)-[alpha-D-Man-(1-&gt;3)-{alpha-D-Man-(1-&gt;6)}-alpha-D-Man-(1-&gt;6)]-beta-D-Man-(1-&gt;4)-beta-D-GlcNAc-(1-&gt;4)-beta-D-GlcNAc}-asparaginyl-[protein] + UDP + H(+). The enzyme catalyses N(4)-{beta-D-GlcNAc-(1-&gt;2)-alpha-D-Man-(1-&gt;3)-beta-D-Man-(1-&gt;4)-beta-D-GlcNAc-(1-&gt;4)-beta-D-GlcNAc}-asparaginyl-[protein] + UDP-N-acetyl-alpha-D-glucosamine = N(4)-{beta-D-GlcNAc-(1-&gt;2)-[beta-D-GlcNAc-(1-&gt;4)]-alpha-D-Man-(1-&gt;3)-beta-D-Man-(1-&gt;4)-beta-D-GlcNAc-(1-&gt;4)-beta-D-GlcNAc}-asparaginyl-[protein] + UDP + H(+). Its pathway is protein modification; protein glycosylation. Its function is as follows. Glycosyltransferase that catalyzes the transfer of GlcNAc from UDP-GlcNAc to the GlcNAcbeta1-2Manalpha1-3 arm of the core structure of N-linked glycans through a beta1-4 linkage and participates in the production of tri- and tetra-antennary N-linked sugar chains. Prefers complex-type N-glycans over hybrid-types. Has lower affinities for donors or acceptors than MGAT4A, suggesting that, under physiological conditions, it is not the main contributor in N-glycan biosynthesis. The sequence is that of Alpha-1,3-mannosyl-glycoprotein 4-beta-N-acetylglucosaminyltransferase B from Homo sapiens (Human).